We begin with the raw amino-acid sequence, 360 residues long: DNA replication and repair protein RecF (360 aa).

Position 30-37 (30-37 (GHNGSGKT)) interacts with ATP.

Belongs to the RecF family.

It localises to the cytoplasm. In terms of biological role, the RecF protein is involved in DNA metabolism; it is required for DNA replication and normal SOS inducibility. RecF binds preferentially to single-stranded, linear DNA. It also seems to bind ATP. The polypeptide is DNA replication and repair protein RecF (Actinobacillus pleuropneumoniae serotype 3 (strain JL03)).